The following is a 478-amino-acid chain: Antiviral innate immune response effector IFIT1 (478 aa).

TPR repeat units follow at residues 52–85, 95–128, 141–174, 183–216, 218–249, and 251–284; these read VGIHNLLAYVKHLKGQNEEALKSLKEAENLMQEE, LVTWGNFAWMYYHMGRLAEAQTYLDKVENICKKL, IDCEEGWALLKCGGKNYERAKACFEKVLEVDPEN, ISAYRLDGFKLATKNHKPFSLLPLRQAVRLNPDN, YIKVLLALKLQDEGQEAEGEKYIEEALANMSS, and TYVFRYAAKFYRRKGSVDKALELLKKALQETPTS. An mRNA-binding site is contributed by W147. G190 serves as a coordination point for RNA. RNA contacts are provided by K259, H289, Q290, and K336. 4 TPR repeats span residues 305-339, 340-373, 378-412, and 437-470; these read ATKGQPRGQNREKLDKMIRSAIFHFESAVEKKPTF, EVAHLDLARMYIEAGNHRKAEENFQKLLCMKPVV, QDIHFHYGRFQEFQKKSDVNAIIHYLKAIKIEQAS, and LESLSLLGFVYKLEGNMNEALEYYERALRLAADF.

The protein belongs to the IFIT family. Component of an interferon-dependent multiprotein complex, at least composed of IFIT1, IFIT2 and IFIT3. Interacts (via TPR repeats 1-4) with RPL15. Interacts with STING1/MITA; could disrupt STING1 interaction with MAVS or TBK1, acting as a negative-feedback regulator of virus-triggered signaling. Interacts with EIF3E; this could be an alternative way to inhibit translation. In terms of processing, phosphorylated. ISGylated.

It is found in the cytoplasm. Plays a key role in the innate immune response as part of an interferon-dependent multiprotein complex, recognizing and sequestering viral RNAs that lack host-specific 2'-O-methylation at their 5' cap. By distinguishing these RNAs from host mRNAs, inhibits their translation by competing with the translation initiation factor eIF4E. Could also prevent viral replication through its interaction with DNA replication origin-binding protein E1 of several viruses. Causes the translocation of E1 from the nucleus to the cytoplasm and can also inhibit its helicase activity in vitro. Exhibits antiviral activity against many viruses from the Flaviviridae (West Nile virus, Dengue virus, hepatitis C virus), Coronaviridae (human 229E coronavirus, SARS-CoV-2 and SARS-CoV), Poxviridae (vaccinia virus) and Togaviridae (Sindbis virus) families. The sequence is that of Antiviral innate immune response effector IFIT1 from Homo sapiens (Human).